The sequence spans 65 residues: Large ribosomal subunit protein uL29 (65 aa).

The protein belongs to the universal ribosomal protein uL29 family.

This Dehalococcoides mccartyi (strain ATCC BAA-2266 / KCTC 15142 / 195) (Dehalococcoides ethenogenes (strain 195)) protein is Large ribosomal subunit protein uL29.